A 67-amino-acid chain; its full sequence is Protein AaeX (67 aa).

The next 2 membrane-spanning stretches (helical) occupy residues 3-23 (LFPVIVIFGLSFPPIFFELLL) and 43-63 (FVWHPALFNTALYCCLFYLLS).

It belongs to the AaeX family.

The protein localises to the cell membrane. This Cronobacter sakazakii (strain ATCC BAA-894) (Enterobacter sakazakii) protein is Protein AaeX.